Here is a 235-residue protein sequence, read N- to C-terminus: Small ribosomal subunit protein eS6 (235 aa).

A phosphoserine mark is found at serine 229 and serine 230.

Belongs to the eukaryotic ribosomal protein eS6 family. In terms of processing, phosphorylated.

This is Small ribosomal subunit protein eS6 (RPS6) from Kluyveromyces marxianus (Yeast).